The sequence spans 398 residues: Riboflavin biosynthesis protein RibBA (398 aa).

The tract at residues 1 to 199 (MFHPIEEALD…IKDLIQYRYN (199 aa)) is DHBP synthase. D-ribulose 5-phosphate is bound by residues 26–27 (RE), Asp-31, 138–142 (RAGHT), and Glu-162. Glu-27 lines the Mg(2+) pocket. His-141 is a Mg(2+) binding site. The GTP cyclohydrolase II stretch occupies residues 200-398 (LTTLVEREVD…MNKLGHLLHF (199 aa)). Residue 251 to 255 (RVHSE) participates in GTP binding. Zn(2+)-binding residues include Cys-256, Cys-267, and Cys-269. GTP-binding positions include Gln-272, 294 to 296 (EGR), and Thr-316. Asp-328 functions as the Proton acceptor; for GTP cyclohydrolase activity in the catalytic mechanism. Arg-330 serves as the catalytic Nucleophile; for GTP cyclohydrolase activity. Positions 351 and 356 each coordinate GTP.

This sequence in the N-terminal section; belongs to the DHBP synthase family. It in the C-terminal section; belongs to the GTP cyclohydrolase II family. It depends on Mg(2+) as a cofactor. Mn(2+) serves as cofactor. The cofactor is Zn(2+).

The catalysed reaction is D-ribulose 5-phosphate = (2S)-2-hydroxy-3-oxobutyl phosphate + formate + H(+). It carries out the reaction GTP + 4 H2O = 2,5-diamino-6-hydroxy-4-(5-phosphoribosylamino)-pyrimidine + formate + 2 phosphate + 3 H(+). The protein operates within cofactor biosynthesis; riboflavin biosynthesis; 2-hydroxy-3-oxobutyl phosphate from D-ribulose 5-phosphate: step 1/1. It functions in the pathway cofactor biosynthesis; riboflavin biosynthesis; 5-amino-6-(D-ribitylamino)uracil from GTP: step 1/4. Its function is as follows. Catalyzes the conversion of D-ribulose 5-phosphate to formate and 3,4-dihydroxy-2-butanone 4-phosphate. Functionally, catalyzes the conversion of GTP to 2,5-diamino-6-ribosylamino-4(3H)-pyrimidinone 5'-phosphate (DARP), formate and pyrophosphate. The polypeptide is Riboflavin biosynthesis protein RibBA (Bacillus subtilis (strain 168)).